A 341-amino-acid polypeptide reads, in one-letter code: MEEHDYDSNSNPPLMSTYKHLFVEQHRLDMDMGAIDVDECELPVIDLAGLMEAEQVCRADMVRAASEWGFFQVTNHGVPQALLRELHDAQVAVFRRPFQEKVTERLLGFSPESYRWGTPTAKCLEQLSWSEAYHIPMTTPRPSTSIRARAVIEEVSRAMYELAQKLAEILMRGLPGAGEGETMVTTREETCFLRLNRYPPCAMAMGGFGLCPHTDSDLLTIVHQQQDTVGGLQLLKGGRWVAVKPSPSTLIVNVGDLLQAWSNDVYKSVEHRVMANATLERFSMAFFLCPSYHTLIIPSSSHVHDDDAHYRSFTFGEYRKQIMEDVRSTGRKIGLHRFRTR.

The Fe2OG dioxygenase domain maps to 187–290 (REETCFLRLN…RFSMAFFLCP (104 aa)). Y198 provides a ligand contact to 2-oxoglutarate. Fe cation is bound by residues H213, D215, and H271. The 2-oxoglutarate site is built by R281 and S283.

This sequence belongs to the iron/ascorbate-dependent oxidoreductase family. GA2OX subfamily. L-ascorbate serves as cofactor. Fe(2+) is required as a cofactor. In terms of tissue distribution, expressed in roots, leaves, culms, leaf sheaths and young panicles.

The protein localises to the cytoplasm. Its subcellular location is the nucleus. The catalysed reaction is gibberellin A1 + 2-oxoglutarate + O2 = gibberellin A8 + succinate + CO2. The protein operates within plant hormone biosynthesis; gibberellin biosynthesis. Its function is as follows. Catalyzes the 2-beta-hydroxylation of several biologically active gibberellins (GAs), leading to the homeostatic regulation of their endogenous level. Catabolism of GAs plays a central role in plant development. In vitro, converts GA12 and GA53 to the corresponding 2-beta-hydroxylated products GA110 and GA97, respectively. The sequence is that of Gibberellin 2-beta-dioxygenase 5 from Oryza sativa subsp. japonica (Rice).